A 250-amino-acid polypeptide reads, in one-letter code: Putative ankyrin repeat protein RBE_0623 (250 aa).

ANK repeat units lie at residues 70–99 (IGDS…EPNT), 104–134 (NCYT…NINE), and 137–166 (GKET…PDKF).

The polypeptide is Putative ankyrin repeat protein RBE_0623 (Rickettsia bellii (strain RML369-C)).